Consider the following 878-residue polypeptide: Alanine--tRNA ligase (878 aa).

His-567, His-571, Cys-668, and His-672 together coordinate Zn(2+).

Belongs to the class-II aminoacyl-tRNA synthetase family. Zn(2+) is required as a cofactor.

The protein localises to the cytoplasm. It carries out the reaction tRNA(Ala) + L-alanine + ATP = L-alanyl-tRNA(Ala) + AMP + diphosphate. Catalyzes the attachment of alanine to tRNA(Ala) in a two-step reaction: alanine is first activated by ATP to form Ala-AMP and then transferred to the acceptor end of tRNA(Ala). Also edits incorrectly charged Ser-tRNA(Ala) and Gly-tRNA(Ala) via its editing domain. In Magnetococcus marinus (strain ATCC BAA-1437 / JCM 17883 / MC-1), this protein is Alanine--tRNA ligase.